The primary structure comprises 167 residues: Large ribosomal subunit protein uL10 (167 aa).

It belongs to the universal ribosomal protein uL10 family. As to quaternary structure, part of the ribosomal stalk of the 50S ribosomal subunit. The N-terminus interacts with L11 and the large rRNA to form the base of the stalk. The C-terminus forms an elongated spine to which L12 dimers bind in a sequential fashion forming a multimeric L10(L12)X complex.

Functionally, forms part of the ribosomal stalk, playing a central role in the interaction of the ribosome with GTP-bound translation factors. This is Large ribosomal subunit protein uL10 from Mycoplasma mobile (strain ATCC 43663 / 163K / NCTC 11711) (Mesomycoplasma mobile).